The following is a 241-amino-acid chain: Beta-nerve growth factor (241 aa).

The first 18 residues, M1 to A18, serve as a signal peptide directing secretion. Positions E19–R121 are excised as a propeptide. 3 N-linked (GlcNAc...) asparagine glycosylation sites follow: N69, N114, and N166. Cystine bridges form between C136/C201, C179/C229, and C189/C231. Y173 and K209 together coordinate a 1-acyl-sn-glycero-3-phospho-(1D-myo-inositol). Position 209 (K209) interacts with a 1-acyl-sn-glycero-3-phospho-L-serine.

The protein belongs to the NGF-beta family. As to quaternary structure, homodimer. The homodimer interacts with a single NTRK1 chain. The homodimer interacts with a single NGFR chain. The NGF dimer interacts with a single SORCS2 chain (via extracellular domain). The NGF precursor (proNGF) binds to a receptor complex formed by SORT1 and NGFR, which leads to NGF endocytosis. Both mature NGF and the immature NGF precursor (proNGF) interact with SORCS2 and with the heterodimer formed by SORCS2 and NGFR (via extracellular domains). The NGF precursor (proNGF) has much higher affinity for SORCS2 than mature NGF. The NGF precursor (proNGF) has much higher affinity for SORT1 than mature NGF. Interacts with ADAM10 in a divalent cation-dependent manner. Interacts with SORCS3.

The protein localises to the secreted. It localises to the endosome lumen. In terms of biological role, nerve growth factor is important for the development and maintenance of the sympathetic and sensory nervous systems. Extracellular ligand for the NTRK1 and NGFR receptors, activates cellular signaling cascades to regulate neuronal proliferation, differentiation and survival. The immature NGF precursor (proNGF) functions as a ligand for the heterodimeric receptor formed by SORCS2 and NGFR, and activates cellular signaling cascades that lead to inactivation of RAC1 and/or RAC2, reorganization of the actin cytoskeleton and neuronal growth cone collapse. In contrast to mature NGF, the precursor form (proNGF) promotes neuronal apoptosis (in vitro). Inhibits metalloproteinase-dependent proteolysis of platelet glycoprotein VI. Binds lysophosphatidylinositol and lysophosphatidylserine between the two chains of the homodimer. The lipid-bound form promotes histamine relase from mast cells, contrary to the lipid-free form. This Pan troglodytes (Chimpanzee) protein is Beta-nerve growth factor (NGF).